The sequence spans 470 residues: MKNFLCEDFLLSNETARRLYHEHAFHQPIYDYHCHLNPAEVAQNRQFDNLGQIWLEGDHYKWRGMRSAGIEERLITGDASDYDKYMAWAKTVPQTLGNPLYHWTHLELRRPFGITNALFSPDTADQIWHQCNELLATPEFTARGIMQQMNVVMAGTTDDPIDSLEHHKAIAEDDTFNVKVLPSWRPDKAFKIELDVFADYMHKLGEVADIEIRRFDDLLSALDKRLAHFDAHGCRAADHGIEIVRYAPIPSEADLDALLARRLSGEVLSELECAQFSTAVQVWLGKRYAQLGWVMQLHIGAQRNNSTRMFQLLGADAGFDSIGDRPFAFELAHLLDEMDQTNELPRTILYCLNPRDNEMMATMIGNFQGGGIAGKVQFGSGWWFNDQKDGMQRQMEQLSQLGLLSQFVGMLTDSRSFLSYTRHEYFRRILCDMVGRWAENGEVPNDLSLLGPMVEDICFGNAKRYFEERA.

The protein belongs to the metallo-dependent hydrolases superfamily. Uronate isomerase family.

The catalysed reaction is D-glucuronate = D-fructuronate. The enzyme catalyses aldehydo-D-galacturonate = keto-D-tagaturonate. It participates in carbohydrate metabolism; pentose and glucuronate interconversion. This chain is Uronate isomerase, found in Vibrio vulnificus (strain YJ016).